The sequence spans 220 residues: Putative 3-methyladenine DNA glycosylase (220 aa).

It belongs to the DNA glycosylase MPG family.

This chain is Putative 3-methyladenine DNA glycosylase, found in Rickettsia bellii (strain RML369-C).